The following is a 335-amino-acid chain: Fimbrial adhesin PapGIII (335 aa).

The signal sequence occupies residues 1–21 (MKKWLPAFLFLSLSGCNDALA).

It belongs to the adhesin PapG family.

Its subcellular location is the secreted. The protein resides in the fimbrium. Tip adhesin component of type P pili that binds preferentially to Gal-alpha(1-4)-Gal-containing glycolipids such as globoside. This tip is common in E.coli strains that cause human cystitis, but rare in pyelonephritic isolates. The protein is Fimbrial adhesin PapGIII of Escherichia coli.